A 104-amino-acid chain; its full sequence is Naphthalene 1,2-dioxygenase system, ferredoxin component (104 aa).

Positions 6–101 constitute a Rieske domain; sequence IDAVALYEIP…VKIEGQRVMI (96 aa). [2Fe-2S] cluster-binding residues include Cys45, His47, Cys64, and His67.

This sequence belongs to the bacterial ring-hydroxylating dioxygenase ferredoxin component family. In terms of assembly, the naphthalene dioxygenase (NDO) multicomponent enzyme system is composed of an electron transfer component and a dioxygenase component (iron sulfur protein (ISP)). The electron transfer component is composed of a ferredoxin reductase (NdoR) and a ferredoxin (NdoA), and the dioxygenase component is formed of a heterohexamer (trimer of heterodimers) of three large alpha subunits (NdoB) and three small beta subunits (NdoC). It depends on [2Fe-2S] cluster as a cofactor.

Its pathway is aromatic compound metabolism; naphthalene degradation. Component of the naphthalene dioxygenase (NDO) multicomponent enzyme system which catalyzes the incorporation of both atoms of molecular oxygen into naphthalene to form cis-(1R,2S)-dihydroxy-1,2-dihydronaphthalene. Functions as an intermediate electron transfer protein via a specific interaction with iron sulfur protein components (ISP) (NdoB and NdoC). The chain is Naphthalene 1,2-dioxygenase system, ferredoxin component from Pseudomonas aeruginosa.